Consider the following 439-residue polypeptide: Elongation factor 1-alpha 2 (439 aa).

The 224-residue stretch at 6-229 (KDHLNLVVIG…DEFKVPKRPI (224 aa)) folds into the tr-type G domain. Positions 15–22 (GHVDSGKS) are G1. Residue 15–22 (GHVDSGKS) participates in GTP binding. Positions 71–75 (GITIN) are G2. The interval 92-95 (DAPG) is G3. Residues 92-96 (DAPGH) and 154-157 (NKMD) contribute to the GTP site. The segment at 154-157 (NKMD) is G4. The interval 193 to 195 (SGF) is G5.

It belongs to the TRAFAC class translation factor GTPase superfamily. Classic translation factor GTPase family. EF-Tu/EF-1A subfamily.

Its subcellular location is the cytoplasm. In terms of biological role, this protein promotes the GTP-dependent binding of aminoacyl-tRNA to the A-site of ribosomes during protein biosynthesis. The chain is Elongation factor 1-alpha 2 (EFA2) from Euplotes crassus.